A 138-amino-acid chain; its full sequence is Putative pre-16S rRNA nuclease (138 aa).

Belongs to the YqgF nuclease family.

It localises to the cytoplasm. Functionally, could be a nuclease involved in processing of the 5'-end of pre-16S rRNA. This is Putative pre-16S rRNA nuclease from Salmonella schwarzengrund (strain CVM19633).